A 391-amino-acid chain; its full sequence is PPE family protein PPE15 (391 aa).

Residues 312–367 (LGEATLVGRLSVPAAWSTAAPATTAGATALEGSGWTVAAEEAGPVTGMMPGMASAA) are eukaryotic-like SH3 domain.

The protein belongs to the mycobacterial PPE family. As to quaternary structure, forms a heterodimer with PE8. The dimer forms a 1:1:1 heterotrimeric complex with EspG5. PPE15 interacts directly with EspG5. Interacts via the C-terminal region with host Toll-like receptor 4 (TLR4). Interacts, also via the C-terminal region, with two cytosolic subunits of the host NOX complex, p47phox (NCF1) and p67phox (NCF2).

The protein resides in the secreted. Its subcellular location is the host mitochondrion. Functionally, may play a critical role in the homeostasis of triacylglycerol-containing lipid droplets in M.tuberculosis and influence the entry of the pathogen into a dormant state. Is recognized by host TLR4 receptor at the macrophage cell surface, which modulates the host immune response, induces mitochondrial stress and perturbations, and induces macrophage apoptosis leading to pathogen persistence. Also downregulates NOX-mediated reactive oxygen species (ROS) generation in THP1 macrophages, which increases intracellular survival of bacteria. PPE15 interacts with two subunits of the host NADPH oxidase (NOX) complex in the cytosol of macrophages and prevents their migration to the membrane, which inhibits the assembly of the NOX complex at the plasma membrane of THP1 macrophages. This leads to reduced NOX activity and diminished ROS generation. In Mycobacterium tuberculosis (strain CDC 1551 / Oshkosh), this protein is PPE family protein PPE15 (PPE15).